The primary structure comprises 84 residues: Apoptosis inhibitor Rv3654c (84 aa).

The first 39 residues, 1 to 39 (MVARHRAQAAADLASLAAAARLPSGLAAACARATLVARA), serve as a signal peptide directing secretion.

Interacts with human polypyrimidine tract binding protein-associated splicing factor (PSF).

Its subcellular location is the secreted. The protein localises to the host cytoplasm. Effector protein that participates in the suppression of macrophage apoptosis by blocking the extrinsic pathway. Recognizes the host polypyrimidine tract binding protein-associated splicing factor (PSF), which probably leads to its cleavage, diminishing the level of caspase-8 in macrophages. The sequence is that of Apoptosis inhibitor Rv3654c from Mycobacterium tuberculosis (strain ATCC 25618 / H37Rv).